Reading from the N-terminus, the 701-residue chain is Glycine--tRNA ligase beta subunit (701 aa).

This sequence belongs to the class-II aminoacyl-tRNA synthetase family. As to quaternary structure, tetramer of two alpha and two beta subunits.

It localises to the cytoplasm. The catalysed reaction is tRNA(Gly) + glycine + ATP = glycyl-tRNA(Gly) + AMP + diphosphate. The sequence is that of Glycine--tRNA ligase beta subunit from Helicobacter pylori (strain HPAG1).